Reading from the N-terminus, the 207-residue chain is Thiamine-phosphate synthase (207 aa).

4-amino-2-methyl-5-(diphosphooxymethyl)pyrimidine-binding positions include 37–41 (QLREK) and N69. Residues D70 and D89 each coordinate Mg(2+). S108 lines the 4-amino-2-methyl-5-(diphosphooxymethyl)pyrimidine pocket. 134-136 (TGS) is a 2-[(2R,5Z)-2-carboxy-4-methylthiazol-5(2H)-ylidene]ethyl phosphate binding site. K137 is a binding site for 4-amino-2-methyl-5-(diphosphooxymethyl)pyrimidine. 2-[(2R,5Z)-2-carboxy-4-methylthiazol-5(2H)-ylidene]ethyl phosphate is bound by residues G165 and 185 to 186 (IS).

The protein belongs to the thiamine-phosphate synthase family. The cofactor is Mg(2+).

It catalyses the reaction 2-[(2R,5Z)-2-carboxy-4-methylthiazol-5(2H)-ylidene]ethyl phosphate + 4-amino-2-methyl-5-(diphosphooxymethyl)pyrimidine + 2 H(+) = thiamine phosphate + CO2 + diphosphate. The catalysed reaction is 2-(2-carboxy-4-methylthiazol-5-yl)ethyl phosphate + 4-amino-2-methyl-5-(diphosphooxymethyl)pyrimidine + 2 H(+) = thiamine phosphate + CO2 + diphosphate. The enzyme catalyses 4-methyl-5-(2-phosphooxyethyl)-thiazole + 4-amino-2-methyl-5-(diphosphooxymethyl)pyrimidine + H(+) = thiamine phosphate + diphosphate. Its pathway is cofactor biosynthesis; thiamine diphosphate biosynthesis; thiamine phosphate from 4-amino-2-methyl-5-diphosphomethylpyrimidine and 4-methyl-5-(2-phosphoethyl)-thiazole: step 1/1. Its function is as follows. Condenses 4-methyl-5-(beta-hydroxyethyl)thiazole monophosphate (THZ-P) and 2-methyl-4-amino-5-hydroxymethyl pyrimidine pyrophosphate (HMP-PP) to form thiamine monophosphate (TMP). The chain is Thiamine-phosphate synthase from Desulfitobacterium hafniense (strain DSM 10664 / DCB-2).